Here is a 1494-residue protein sequence, read N- to C-terminus: Ral GTPase-activating protein subunit beta (1494 aa).

2 disordered regions span residues 355–437 (PRSD…APRR) and 709–738 (ENNLKSHSRTNSGISSASGGSTEPTTPDSE). Serine 359 is subject to Phosphoserine. 2 positions are modified to phosphothreonine: threonine 363 and threonine 379. Composition is skewed to polar residues over residues 369–381 (SMPQSAAVSTTPP), 392–428 (NKATMKTSTVSTAHASKVQHQTSSTSPLSSPNQTSSE), and 711–735 (NLKSHSRTNSGISSASGGSTEPTTP). Serine 421 and serine 720 each carry phosphoserine. A Phosphothreonine modification is found at threonine 734. Positions 1149–1392 (IGYLDLLPCR…TTLEKEVPVI (244 aa)) constitute a Rap-GAP domain. Serine 1285 carries the post-translational modification Phosphoserine. The segment covering 1312 to 1323 (NLNSSQRLSPSS) has biased composition (polar residues). Residues 1312-1335 (NLNSSQRLSPSSRMRKLPQGRPVP) are disordered.

In terms of assembly, component of the heterodimeric RalGAP1 complex with RALGAPA1 and of the heterodimeric RalGAP2 complex with RALGAPA2. Heterodimerization is required for activity. As to expression, highly expressed in brain, mostly in amygdala.

In terms of biological role, non-catalytic subunit of the heterodimeric RalGAP1 and RalGAP2 complexes which act as GTPase activators for the Ras-like small GTPases RALA and RALB. The sequence is that of Ral GTPase-activating protein subunit beta (RALGAPB) from Homo sapiens (Human).